We begin with the raw amino-acid sequence, 987 residues long: Pro-apoptotic serine protease NMA111 (987 aa).

The disordered stretch occupies residues 1–29; the sequence is MPDIPTKRRLSNGSVIDNTNKRQMQSSFV. Residues 11–28 are compositionally biased toward polar residues; sequence SNGSVIDNTNKRQMQSSF. Positions 69–262 are serine protease; the sequence is VKSVVSIQFT…LPVYRPLRAL (194 aa). Catalysis depends on charge relay system residues H110, D141, and S224. PDZ domains are found at residues 279 to 364 and 878 to 950; these read EWSL…VVIQ and PHHG…VSFD.

This sequence belongs to the peptidase S1C family.

Its subcellular location is the nucleus. Functionally, nuclear serine protease which mediates apoptosis. The chain is Pro-apoptotic serine protease NMA111 (NMA111) from Debaryomyces hansenii (strain ATCC 36239 / CBS 767 / BCRC 21394 / JCM 1990 / NBRC 0083 / IGC 2968) (Yeast).